Consider the following 988-residue polypeptide: Exportin-T (988 aa).

This sequence belongs to the exportin family.

The protein localises to the nucleus. It localises to the cytoplasm. Its function is as follows. tRNA nucleus export receptor which facilitates tRNA translocation across the nuclear pore complex. Involved in pre-tRNA splicing, probably by affecting the interaction of pre-tRNA with splicing endonuclease. The sequence is that of Exportin-T (LOS1) from Lodderomyces elongisporus (strain ATCC 11503 / CBS 2605 / JCM 1781 / NBRC 1676 / NRRL YB-4239) (Yeast).